Consider the following 281-residue polypeptide: Sorbose reductase SOU1 (281 aa).

I47, K74, and N119 together coordinate NADP(+). Residues S173 and Y188 each act as proton donor in the active site. NADP(+)-binding residues include Y188, K192, I221, and T223. The Lowers pKa of active site Tyr role is filled by K192.

The protein belongs to the short-chain dehydrogenases/reductases (SDR) family. Homotetramer.

It carries out the reaction D-sorbitol + NADP(+) = keto-L-sorbose + NADPH + H(+). It participates in carbohydrate degradation; L-sorbose degradation. Functionally, catalyzes the NADP dependent reduction of L-sorbose to D-glucitol. Can also convert fructose to mannitol, but less efficiently. The sequence is that of Sorbose reductase SOU1 (SOU1) from Candida albicans (strain SC5314 / ATCC MYA-2876) (Yeast).